The chain runs to 71 residues: UPF0435 protein BLi00816/BL03111 (71 aa).

This sequence belongs to the UPF0435 family.

This is UPF0435 protein BLi00816/BL03111 from Bacillus licheniformis (strain ATCC 14580 / DSM 13 / JCM 2505 / CCUG 7422 / NBRC 12200 / NCIMB 9375 / NCTC 10341 / NRRL NRS-1264 / Gibson 46).